The following is a 957-amino-acid chain: Collagen alpha-1(XXI) chain (957 aa).

The signal sequence occupies residues 1–16 (MPGIIYILCSILLIES). The 175-residue stretch at 37-211 (DLVFILDGSW…RIREIMKQKL (175 aa)) folds into the VWFA domain. Positions 230–412 (GFDILLGLGI…LQKLRIYCDP (183 aa)) constitute a Laminin G-like domain. Disordered regions lie at residues 441 to 788 (PAPC…GKEQ) and 820 to 935 (CKTQ…DAGI). Collagen-like domains follow at residues 448 to 501 (PGEK…PRGF), 502 to 543 (AGLK…DKGD), 544 to 591 (IGID…EEGK), 592 to 642 (PGPP…ISGP), 643 to 684 (EGIS…IPGQ), 685 to 741 (QGYT…EIGE), 742 to 786 (HGHR…QQGK), and 825 to 882 (GSPG…GNKG). The span at 483–498 (TSGSPGIPGSPGVQGP) shows a compositional bias: low complexity. The span at 535–556 (MGPKGDKGDIGIDGKKGTKGDK) shows a compositional bias: basic and acidic residues. Composition is skewed to low complexity over residues 597-616 (MEGL…DGAN) and 633-649 (PTGT…SGPQ). Over residues 733–744 (KGEKGEIGEHGH) the composition is skewed to basic and acidic residues. The segment covering 775 to 786 (QGLPGPKGQQGK) has biased composition (low complexity).

The protein belongs to the fibril-associated collagens with interrupted helices (FACIT) family.

It is found in the secreted. The protein localises to the extracellular space. It localises to the extracellular matrix. Its subcellular location is the cytoplasm. This Xenopus laevis (African clawed frog) protein is Collagen alpha-1(XXI) chain (col21a1).